Consider the following 351-residue polypeptide: Uroporphyrinogen decarboxylase (351 aa).

Substrate contacts are provided by residues 25–29 (RQAGR), Asp-74, Tyr-151, Ser-206, and His-325.

This sequence belongs to the uroporphyrinogen decarboxylase family. In terms of assembly, homodimer.

Its subcellular location is the cytoplasm. The enzyme catalyses uroporphyrinogen III + 4 H(+) = coproporphyrinogen III + 4 CO2. The protein operates within porphyrin-containing compound metabolism; protoporphyrin-IX biosynthesis; coproporphyrinogen-III from 5-aminolevulinate: step 4/4. Catalyzes the decarboxylation of four acetate groups of uroporphyrinogen-III to yield coproporphyrinogen-III. In Chlorobium luteolum (strain DSM 273 / BCRC 81028 / 2530) (Pelodictyon luteolum), this protein is Uroporphyrinogen decarboxylase.